We begin with the raw amino-acid sequence, 236 residues long: Leucyl/phenylalanyl-tRNA--protein transferase (236 aa).

It belongs to the L/F-transferase family.

Its subcellular location is the cytoplasm. The enzyme catalyses N-terminal L-lysyl-[protein] + L-leucyl-tRNA(Leu) = N-terminal L-leucyl-L-lysyl-[protein] + tRNA(Leu) + H(+). It catalyses the reaction N-terminal L-arginyl-[protein] + L-leucyl-tRNA(Leu) = N-terminal L-leucyl-L-arginyl-[protein] + tRNA(Leu) + H(+). The catalysed reaction is L-phenylalanyl-tRNA(Phe) + an N-terminal L-alpha-aminoacyl-[protein] = an N-terminal L-phenylalanyl-L-alpha-aminoacyl-[protein] + tRNA(Phe). Functionally, functions in the N-end rule pathway of protein degradation where it conjugates Leu, Phe and, less efficiently, Met from aminoacyl-tRNAs to the N-termini of proteins containing an N-terminal arginine or lysine. The chain is Leucyl/phenylalanyl-tRNA--protein transferase from Aliivibrio salmonicida (strain LFI1238) (Vibrio salmonicida (strain LFI1238)).